A 1033-amino-acid chain; its full sequence is E3 ubiquitin-protein ligase Topors (1033 aa).

The segment covering 1 to 10 has biased composition (pro residues); it reads MGSQPPPPGS. The interval 1-36 is disordered; it reads MGSQPPPPGSPLSREEGEAPPLVPAEEGRRRSRRVR. Residues 52 to 376 form a required for DNA-binding region; sequence ELASNGPAVP…MAAFDQHANY (325 aa). Glycyl lysine isopeptide (Lys-Gly) (interchain with G-Cter in SUMO2) cross-links involve residues Lys-74, Lys-77, Lys-84, and Lys-89. Position 99 is a phosphoserine (Ser-99). The segment at 104–143 adopts an RING-type zinc-finger fold; the sequence is CPICLDRFDNVSYLDRCLHKFCFRCVQEWSKNKAECPLCK. Lys-160 is covalently cross-linked (Glycyl lysine isopeptide (Lys-Gly) (interchain with G-Cter in SUMO2)). Ser-196 is subject to Phosphoserine. A Glycyl lysine isopeptide (Lys-Gly) (interchain with G-Cter in SUMO2) cross-link involves residue Lys-251. Disordered regions lie at residues 414–477 and 496–692; these read QAPW…SSSD and VELS…RYYL. Residues 434–444 are compositionally biased toward low complexity; it reads VGVSSLLNSSD. The interval 438–574 is sumoylation and localization to discrete nuclear foci; it reads SLLNSSDSSD…RSTSLPAPRD (137 aa). The segment at 438–654 is interaction with SUMO1; it reads SLLNSSDSSD…RSRTRDSSWS (217 aa). Residues 455 to 464 are compositionally biased toward polar residues; it reads TTSQIQGVQT. The interaction with p53/TP53 stretch occupies residues 457-731; it reads SQIQGVQTND…RRTLSRAHYS (275 aa). The interval 457 to 879 is interaction with TOP1; that stretch reads SQIQGVQTND…GKATDTSKHH (423 aa). Over residues 465-477 the composition is skewed to low complexity; it reads NDDVNNDSDSSSD. Position 500 is a phosphoserine (Ser-500). Basic and acidic residues predominate over residues 507–518; the sequence is PYEKVETVKTQE. Residues 522–535 show a composition bias toward low complexity; the sequence is SYSSGDSDVSRASS. The span at 540-566 shows a compositional bias: basic and acidic residues; it reads LGKDEQMSKSHCDSDTRISSKKEEKRS. Lys-561 is covalently cross-linked (Glycyl lysine isopeptide (Lys-Gly) (interchain with G-Cter in SUMO)). The residue at position 585 (Ser-585) is a Phosphoserine. Basic residues-rich tracts occupy residues 613–629 and 637–647; these read RNHR…KRSR and PRARKDKKRSR. Over residues 654–669 the composition is skewed to low complexity; sequence SRRSQTLSLSSGSTSR. Residue Lys-701 forms a Glycyl lysine isopeptide (Lys-Gly) (interchain with G-Cter in SUMO2) linkage. Disordered regions lie at residues 713-934 and 970-1033; these read RDGY…PIQD and TVEN…CDVS. Ser-718 carries the phosphoserine; by PLK1 modification. Residues 721-730 show a composition bias toward basic residues; it reads RRRTLSRAHY. Polar residues predominate over residues 731-747; that stretch reads SRQSSSPEFRIQSFSER. At Ser-734 the chain carries Phosphoserine. Residues 770 to 780 are compositionally biased toward low complexity; the sequence is SVSSNRSRTTS. The span at 815-837 shows a compositional bias: basic and acidic residues; that stretch reads FTSKGKDSHYQKSKLDGSYKNES. Residues Lys-818 and Lys-834 each participate in a glycyl lysine isopeptide (Lys-Gly) (interchain with G-Cter in SUMO2) cross-link. Over residues 851 to 860 the composition is skewed to basic residues; it reads KHKRRRRRTR. The interval 851–914 is interaction with UBE2I; it reads KHKRRRRRTR…ITIDSDSDGE (64 aa). Phosphoserine is present on residues Ser-861 and Ser-863. Over residues 877–894 the composition is skewed to basic residues; that stretch reads KHHKKKKKKHKKKHKKHH. Phosphoserine occurs at positions 909, 911, 999, 1016, and 1025. Positions 992-1008 are enriched in polar residues; it reads TFASDLESQSSNVSIQA.

In terms of assembly, interacts with TOP1. Interacts with the SUMO1 conjugating enzyme UBE2I. Interacts with SUMO1. Interacts with NKX3-1; polyubiquitinates NKX3-1 and induces its proteasomal degradation. Interacts with SIN3A; sumoylates SIN3A. Interacts with IKBKE; induced by DNA damage. Interacts with p53/TP53. Interacts with PARK7/DJ-1. Phosphorylation at Ser-99 regulates the E3 ubiquitin-protein ligase activity but not the SUMO1-protein ligase activity. Phosphorylation at Ser-718 increases the E3 ubiquitin-protein ligase activity versus the E3 SUMO1-protein ligase activity resulting in increased p53/TP53 ubiquitination and degradation. Post-translationally, sumoylated.

The protein localises to the nucleus. Its subcellular location is the PML body. It carries out the reaction S-ubiquitinyl-[E2 ubiquitin-conjugating enzyme]-L-cysteine + [acceptor protein]-L-lysine = [E2 ubiquitin-conjugating enzyme]-L-cysteine + N(6)-ubiquitinyl-[acceptor protein]-L-lysine.. In terms of biological role, functions as an E3 ubiquitin-protein ligase and as a E3 SUMO1-protein ligase. Probable tumor suppressor involved in cell growth, cell proliferation and apoptosis that regulates p53/TP53 stability through ubiquitin-dependent degradation. May regulate chromatin modification through sumoylation of several chromatin modification-associated proteins. May be involved in DNA-damage-induced cell death through IKBKE sumoylation. This Mus musculus (Mouse) protein is E3 ubiquitin-protein ligase Topors (Topors).